Reading from the N-terminus, the 350-residue chain is Probable dual-specificity RNA methyltransferase RlmN (350 aa).

The active-site Proton acceptor is the glutamate 93. A Radical SAM core domain is found at 99–327; sequence SSKRLTVCVS…VSVRYSRGVQ (229 aa). Cysteine 106 and cysteine 332 are disulfide-bonded. [4Fe-4S] cluster contacts are provided by cysteine 113, cysteine 117, and cysteine 120. Residues 160–161, serine 190, 213–215, and asparagine 289 contribute to the S-adenosyl-L-methionine site; these read GE and SLH. Residue cysteine 332 is the S-methylcysteine intermediate of the active site.

It belongs to the radical SAM superfamily. RlmN family. [4Fe-4S] cluster serves as cofactor.

It is found in the cytoplasm. The enzyme catalyses adenosine(2503) in 23S rRNA + 2 reduced [2Fe-2S]-[ferredoxin] + 2 S-adenosyl-L-methionine = 2-methyladenosine(2503) in 23S rRNA + 5'-deoxyadenosine + L-methionine + 2 oxidized [2Fe-2S]-[ferredoxin] + S-adenosyl-L-homocysteine. It catalyses the reaction adenosine(37) in tRNA + 2 reduced [2Fe-2S]-[ferredoxin] + 2 S-adenosyl-L-methionine = 2-methyladenosine(37) in tRNA + 5'-deoxyadenosine + L-methionine + 2 oxidized [2Fe-2S]-[ferredoxin] + S-adenosyl-L-homocysteine. Specifically methylates position 2 of adenine 2503 in 23S rRNA and position 2 of adenine 37 in tRNAs. This chain is Probable dual-specificity RNA methyltransferase RlmN, found in Synechocystis sp. (strain ATCC 27184 / PCC 6803 / Kazusa).